Here is a 520-residue protein sequence, read N- to C-terminus: uncharacterized protein (520 aa).

The next 9 helical transmembrane spans lie at 38 to 58 (VVLI…IPGG), 84 to 104 (IAIY…GIFN), 105 to 125 (IGIS…ILKV), 138 to 158 (IITV…VATL), 167 to 187 (VVSA…LVET), 220 to 240 (FGWL…AVVL), 271 to 291 (FLSF…VYTA), 318 to 338 (IAIG…SVLI), and 355 to 375 (ASLV…MVYF).

It localises to the cell membrane. This is an uncharacterized protein from Mycoplasma genitalium (strain ATCC 33530 / DSM 19775 / NCTC 10195 / G37) (Mycoplasmoides genitalium).